A 339-amino-acid polypeptide reads, in one-letter code: Dihydroorotate dehydrogenase (quinone) (339 aa).

Residues 61–65 (AGLDK) and Thr-85 contribute to the FMN site. Lys-65 contributes to the substrate binding site. A substrate-binding site is contributed by 110–114 (NRMGF). FMN is bound by residues Asn-138 and Asn-171. Asn-171 contacts substrate. Catalysis depends on Ser-174, which acts as the Nucleophile. Substrate is bound at residue Asn-176. Lys-216 and Thr-244 together coordinate FMN. Position 245-246 (245-246 (NT)) interacts with substrate. FMN contacts are provided by residues Gly-267, Gly-296, and 317-318 (YS).

Belongs to the dihydroorotate dehydrogenase family. Type 2 subfamily. As to quaternary structure, monomer. It depends on FMN as a cofactor.

It is found in the cell membrane. The enzyme catalyses (S)-dihydroorotate + a quinone = orotate + a quinol. It participates in pyrimidine metabolism; UMP biosynthesis via de novo pathway; orotate from (S)-dihydroorotate (quinone route): step 1/1. In terms of biological role, catalyzes the conversion of dihydroorotate to orotate with quinone as electron acceptor. The chain is Dihydroorotate dehydrogenase (quinone) from Teredinibacter turnerae (strain ATCC 39867 / T7901).